Consider the following 365-residue polypeptide: 2-aminoethylphosphonate--pyruvate transaminase (365 aa).

Residue K194 is modified to N6-(pyridoxal phosphate)lysine.

This sequence belongs to the class-V pyridoxal-phosphate-dependent aminotransferase family. PhnW subfamily. As to quaternary structure, homodimer. It depends on pyridoxal 5'-phosphate as a cofactor.

The catalysed reaction is (2-aminoethyl)phosphonate + pyruvate = phosphonoacetaldehyde + L-alanine. Functionally, involved in phosphonate degradation. This is 2-aminoethylphosphonate--pyruvate transaminase from Bacillus cereus (strain G9842).